A 352-amino-acid chain; its full sequence is 4-hydroxy-2-oxovalerate aldolase 5 (352 aa).

The Pyruvate carboxyltransferase domain maps to 9–261; that stretch reads IRVTDSSLRD…RTGIDTLKII (253 aa). 17-18 contributes to the substrate binding site; that stretch reads RD. D18 contributes to the Mn(2+) binding site. The active-site Proton acceptor is H21. Positions 171 and 200 each coordinate substrate. H200 and H202 together coordinate Mn(2+). Y291 is a binding site for substrate.

The protein belongs to the 4-hydroxy-2-oxovalerate aldolase family.

The catalysed reaction is (S)-4-hydroxy-2-oxopentanoate = acetaldehyde + pyruvate. This chain is 4-hydroxy-2-oxovalerate aldolase 5, found in Rhodococcus opacus (strain B4).